Here is a 228-residue protein sequence, read N- to C-terminus: Eukaryotic translation initiation factor 6 (228 aa).

Belongs to the eIF-6 family. In terms of assembly, monomer. Associates with the 60S ribosomal subunit.

Its subcellular location is the cytoplasm. The protein resides in the nucleus. It localises to the nucleolus. Its function is as follows. Binds to the 60S ribosomal subunit and prevents its association with the 40S ribosomal subunit to form the 80S initiation complex in the cytoplasm. May also be involved in ribosome biogenesis. The polypeptide is Eukaryotic translation initiation factor 6 (Guillardia theta (Cryptophyte)).